Consider the following 336-residue polypeptide: Holliday junction branch migration complex subunit RuvB (336 aa).

The segment at 4–184 (SDRLISSQSI…FGIVQRLEYY (181 aa)) is large ATPase domain (RuvB-L). ATP is bound by residues Ile23, Arg24, Gly65, Lys68, Thr69, Thr70, 131–133 (EDY), Arg174, Tyr184, and Arg221. Residue Thr69 coordinates Mg(2+). The interval 185–255 (SVDSLTQIVA…MAQQALEMLE (71 aa)) is small ATPAse domain (RuvB-S). Positions 258 to 336 (QHGFDLMDRK…HFGFSAIEQE (79 aa)) are head domain (RuvB-H). 2 residues coordinate DNA: Arg313 and Arg318.

It belongs to the RuvB family. As to quaternary structure, homohexamer. Forms an RuvA(8)-RuvB(12)-Holliday junction (HJ) complex. HJ DNA is sandwiched between 2 RuvA tetramers; dsDNA enters through RuvA and exits via RuvB. An RuvB hexamer assembles on each DNA strand where it exits the tetramer. Each RuvB hexamer is contacted by two RuvA subunits (via domain III) on 2 adjacent RuvB subunits; this complex drives branch migration. In the full resolvosome a probable DNA-RuvA(4)-RuvB(12)-RuvC(2) complex forms which resolves the HJ.

The protein localises to the cytoplasm. The enzyme catalyses ATP + H2O = ADP + phosphate + H(+). In terms of biological role, the RuvA-RuvB-RuvC complex processes Holliday junction (HJ) DNA during genetic recombination and DNA repair, while the RuvA-RuvB complex plays an important role in the rescue of blocked DNA replication forks via replication fork reversal (RFR). RuvA specifically binds to HJ cruciform DNA, conferring on it an open structure. The RuvB hexamer acts as an ATP-dependent pump, pulling dsDNA into and through the RuvAB complex. RuvB forms 2 homohexamers on either side of HJ DNA bound by 1 or 2 RuvA tetramers; 4 subunits per hexamer contact DNA at a time. Coordinated motions by a converter formed by DNA-disengaged RuvB subunits stimulates ATP hydrolysis and nucleotide exchange. Immobilization of the converter enables RuvB to convert the ATP-contained energy into a lever motion, pulling 2 nucleotides of DNA out of the RuvA tetramer per ATP hydrolyzed, thus driving DNA branch migration. The RuvB motors rotate together with the DNA substrate, which together with the progressing nucleotide cycle form the mechanistic basis for DNA recombination by continuous HJ branch migration. Branch migration allows RuvC to scan DNA until it finds its consensus sequence, where it cleaves and resolves cruciform DNA. This chain is Holliday junction branch migration complex subunit RuvB, found in Legionella pneumophila (strain Lens).